Consider the following 255-residue polypeptide: Glycerol-3-phosphate regulon repressor (255 aa).

An HTH deoR-type domain is found at 3–58; sequence QSLRHQKIIKLVEQSGYLSTEELVAALDVSPQTIRRDLNILAELDLIRRHHGGAAS. A DNA-binding region (H-T-H motif) is located at residues 20–39; that stretch reads LSTEELVAALDVSPQTIRRD.

Functionally, repressor of the glycerol-3-phosphate regulon. This is Glycerol-3-phosphate regulon repressor (glpR) from Haemophilus influenzae (strain ATCC 51907 / DSM 11121 / KW20 / Rd).